Here is a 243-residue protein sequence, read N- to C-terminus: NAD-dependent protein deacylase (243 aa).

Residues 1-234 (MYQHIVVLTG…PKLVDTILAG (234 aa)) enclose the Deacetylase sirtuin-type domain. 10–29 (GAGISAESGLRTFRDQDGLW) is a binding site for NAD(+). Substrate-binding residues include Tyr-54 and Arg-57. An NAD(+)-binding site is contributed by 91–94 (QNID). The active-site Proton acceptor is His-109. Zn(2+) is bound by residues Cys-117 and Cys-136. NAD(+)-binding positions include 176-178 (GTS), 202-204 (NLQ), and Ala-220.

It belongs to the sirtuin family. Class III subfamily. Zn(2+) is required as a cofactor.

Its subcellular location is the cytoplasm. The enzyme catalyses N(6)-acetyl-L-lysyl-[protein] + NAD(+) + H2O = 2''-O-acetyl-ADP-D-ribose + nicotinamide + L-lysyl-[protein]. It catalyses the reaction N(6)-succinyl-L-lysyl-[protein] + NAD(+) + H2O = 2''-O-succinyl-ADP-D-ribose + nicotinamide + L-lysyl-[protein]. Its function is as follows. NAD-dependent lysine deacetylase and desuccinylase that specifically removes acetyl and succinyl groups on target proteins. Modulates the activities of several proteins which are inactive in their acylated form. The protein is NAD-dependent protein deacylase of Shewanella oneidensis (strain ATCC 700550 / JCM 31522 / CIP 106686 / LMG 19005 / NCIMB 14063 / MR-1).